The primary structure comprises 199 residues: DNA dC-&gt;dU-editing enzyme APOBEC-3A (199 aa).

A CMP/dCMP-type deaminase domain is found at 27-143 (GRHKTYLCYE…PLYKEALQML (117 aa)). A Zn(2+)-binding site is contributed by H70. E72 (proton donor) is an active-site residue. Zn(2+)-binding residues include C101 and C106.

This sequence belongs to the cytidine and deoxycytidylate deaminase family. As to quaternary structure, interacts with AGO2. Interacts with TRIB3 (via N-terminus). It depends on Zn(2+) as a cofactor. In terms of tissue distribution, expressed in peripheral leukocytes with higher expression in CD14-positive phagocytic cells. Highly expressed in keratinocytes and in periphery blood monocytes. Also detected in non-lymphoid tissues including lung and adipose tissues. Found at high levels in colorectal adenocarcinoma, Burkitt's lymphoma and chronic myelogenous leukemia.

Its subcellular location is the nucleus. It localises to the cytoplasm. The enzyme catalyses a 2'-deoxycytidine in single-stranded DNA + H2O + H(+) = a 2'-deoxyuridine in single-stranded DNA + NH4(+). In terms of biological role, DNA deaminase (cytidine deaminase) with restriction activity against viruses, foreign DNA and mobility of retrotransposons. Exhibits antiviral activity against adeno-associated virus (AAV) and human T-cell leukemia virus type 1 (HTLV-1) and may inhibit the mobility of LTR and non-LTR retrotransposons. Selectively targets single-stranded DNA and can deaminate both methylcytosine and cytosine in foreign DNA. Can induce somatic hypermutation in the nuclear and mitochondrial DNA. May also play a role in the epigenetic regulation of gene expression through the process of active DNA demethylation. In Homo sapiens (Human), this protein is DNA dC-&gt;dU-editing enzyme APOBEC-3A (APOBEC3A).